The sequence spans 189 residues: MGLLDARISNRNVLVTSVDNVMNWARLSSLWPMGFGLACCAIEMMATNASNYDLERFGIFPRSSPRQSDLMIVAGTVTMKMAERVVTLYEQMPEPRYVLSMGSCSNSGGPYWHHGYHVLKGVDRIIPVDVYVPGCPPRPEALIGGLMKIQELIRMEGLGISRQDALKKLAGKRVDPQQVIDQVRKSATA.

Cys39, Cys40, Cys104, and Cys135 together coordinate [4Fe-4S] cluster.

It belongs to the complex I 20 kDa subunit family. In terms of assembly, NDH-1 is composed of 14 different subunits. Subunits NuoB, C, D, E, F, and G constitute the peripheral sector of the complex. Requires [4Fe-4S] cluster as cofactor.

The protein resides in the cell inner membrane. The enzyme catalyses a quinone + NADH + 5 H(+)(in) = a quinol + NAD(+) + 4 H(+)(out). Its function is as follows. NDH-1 shuttles electrons from NADH, via FMN and iron-sulfur (Fe-S) centers, to quinones in the respiratory chain. The immediate electron acceptor for the enzyme in this species is believed to be a menaquinone. Couples the redox reaction to proton translocation (for every two electrons transferred, four hydrogen ions are translocated across the cytoplasmic membrane), and thus conserves the redox energy in a proton gradient. This chain is NADH-quinone oxidoreductase subunit B, found in Chlorobaculum tepidum (strain ATCC 49652 / DSM 12025 / NBRC 103806 / TLS) (Chlorobium tepidum).